A 364-amino-acid polypeptide reads, in one-letter code: Long-wave-sensitive opsin 1 (364 aa).

At 1–52 (MAHTWGPQRLAGGQPQANFEESTQGSIFTYTNSNSTRDPFEGPNYHIAPRWV) the chain is on the extracellular side. A glycan (O-linked (GlcNAc) serine) is linked at Ser-22. A glycan (N-linked (GlcNAc...) asparagine) is linked at Asn-34. A helical transmembrane segment spans residues 53–77 (YHLTSAWMVFVVIASVFTNGLVLAA). The Cytoplasmic segment spans residues 78–89 (TMRFKKLRHPLN). Residues 90–115 (WILVNLAIADLAETIIASTISVVNQM) form a helical membrane-spanning segment. Residues 116 to 129 (YGYFVLGHPLCVVE) are Extracellular-facing. A disulfide bond links Cys-126 and Cys-203. Residues 130-149 (GYTVSLCGITGLWSLAIISW) form a helical membrane-spanning segment. The Cytoplasmic segment spans residues 150–168 (ERWMVVCKPFGNVRFDAKL). Residues 169 to 192 (ATAGIAFSWIWAAVWTAPPIFGWS) form a helical membrane-spanning segment. Residues 193–218 (RYWPHGLKTSCGPDVFSGSSYPGVQS) are Extracellular-facing. The helical transmembrane segment at 219–246 (YMIVLMITCCFIPLSVIILCYLQVWLAI) threads the bilayer. The Cytoplasmic portion of the chain corresponds to 247–268 (RAVAKQQKESESTQKAEKEVTR). A helical membrane pass occupies residues 269-292 (MVMVMIFAYCLCWGPYTFFACFAA). Residues 293 to 300 (AHPGYAFH) lie on the Extracellular side of the membrane. A helical transmembrane segment spans residues 301–325 (PLVAALPAYFAKSATIYNPIIYVFM). Lys-312 is modified (N6-(retinylidene)lysine). Topologically, residues 326–364 (NRQFRNCILQLFGKKVDDSSELSSVSKTEASSVSSVSPA) are cytoplasmic.

It belongs to the G-protein coupled receptor 1 family. Opsin subfamily. In terms of processing, phosphorylated on some or all of the serine and threonine residues present in the C-terminal region. In terms of tissue distribution, the three color pigments are found in the cone photoreceptor cells.

It is found in the membrane. Its function is as follows. Visual pigments are the light-absorbing molecules that mediate vision. They consist of an apoprotein, opsin, covalently linked to cis-retinal. In Capra hircus (Goat), this protein is Long-wave-sensitive opsin 1 (OPN1LW).